Consider the following 102-residue polypeptide: Large ribosomal subunit protein uL23 (102 aa).

The protein belongs to the universal ribosomal protein uL23 family. As to quaternary structure, part of the 50S ribosomal subunit. Contacts protein L29, and trigger factor when it is bound to the ribosome.

Its function is as follows. One of the early assembly proteins it binds 23S rRNA. One of the proteins that surrounds the polypeptide exit tunnel on the outside of the ribosome. Forms the main docking site for trigger factor binding to the ribosome. This is Large ribosomal subunit protein uL23 from Paramagnetospirillum magneticum (strain ATCC 700264 / AMB-1) (Magnetospirillum magneticum).